The sequence spans 614 residues: 1-deoxy-D-xylulose-5-phosphate synthase (614 aa).

Thiamine diphosphate is bound by residues His74 and 115–117 (GHS). Asp146 is a binding site for Mg(2+). Residues 147–148 (GA), Asn175, Tyr282, and Glu363 each bind thiamine diphosphate. Asn175 is a Mg(2+) binding site.

Belongs to the transketolase family. DXPS subfamily. Homodimer. Mg(2+) serves as cofactor. The cofactor is thiamine diphosphate.

It carries out the reaction D-glyceraldehyde 3-phosphate + pyruvate + H(+) = 1-deoxy-D-xylulose 5-phosphate + CO2. The protein operates within metabolic intermediate biosynthesis; 1-deoxy-D-xylulose 5-phosphate biosynthesis; 1-deoxy-D-xylulose 5-phosphate from D-glyceraldehyde 3-phosphate and pyruvate: step 1/1. Functionally, catalyzes the acyloin condensation reaction between C atoms 2 and 3 of pyruvate and glyceraldehyde 3-phosphate to yield 1-deoxy-D-xylulose-5-phosphate (DXP). This chain is 1-deoxy-D-xylulose-5-phosphate synthase, found in Methylobacillus flagellatus (strain ATCC 51484 / DSM 6875 / VKM B-1610 / KT).